Here is a 201-residue protein sequence, read N- to C-terminus: Outer-membrane lipoprotein LolB (201 aa).

Positions 1-18 (MKWCRLSIILMSLILLAG) are cleaved as a signal peptide. A lipid anchor (N-palmitoyl cysteine) is attached at Cys-19. Residue Cys-19 is the site of S-diacylglycerol cysteine attachment.

It belongs to the LolB family. In terms of assembly, monomer.

It is found in the cell outer membrane. Its function is as follows. Plays a critical role in the incorporation of lipoproteins in the outer membrane after they are released by the LolA protein. In Nitrosococcus oceani (strain ATCC 19707 / BCRC 17464 / JCM 30415 / NCIMB 11848 / C-107), this protein is Outer-membrane lipoprotein LolB.